Consider the following 332-residue polypeptide: MKRIPSLIIGLLLILATWHSVLAINDNYDLIIVRNDDLIDYLISLPYSHLINAPILPVNPKELDPVTKAQLYSYIQLGRDKVLIIGNTNAVSLDVEKELRDMGFSVTRIGGADRAETAEKLALHFYQNGSKVVILASAWDYGSTLAAAEFAMEYKCPILLTWENQLSPSALRGIEKLNAKIVILVGFGINETIEKTLEGMGYETYWIGRDIEPPPIETTTSSPPQSSGSKSFFLGMIVTLIILAPVILYLWRRRSERMSEFLEQFNEKELAVLKAIMERGGEVKQEDLPRIVGYSRPTISRIVQDLEKKGIVEREKSGKTFIVRVIKKIKID.

The signal sequence occupies residues 1–23 (MKRIPSLIIGLLLILATWHSVLA). The helical transmembrane segment at 231–251 (SFFLGMIVTLIILAPVILYLW) threads the bilayer.

The protein localises to the membrane. This is an uncharacterized protein from Pyrococcus horikoshii (strain ATCC 700860 / DSM 12428 / JCM 9974 / NBRC 100139 / OT-3).